The primary structure comprises 403 residues: Phosphopentomutase (403 aa).

Positions 13, 298, 303, 339, 340, and 351 each coordinate Mn(2+).

This sequence belongs to the phosphopentomutase family. Requires Mn(2+) as cofactor.

The protein localises to the cytoplasm. It carries out the reaction 2-deoxy-alpha-D-ribose 1-phosphate = 2-deoxy-D-ribose 5-phosphate. The catalysed reaction is alpha-D-ribose 1-phosphate = D-ribose 5-phosphate. It participates in carbohydrate degradation; 2-deoxy-D-ribose 1-phosphate degradation; D-glyceraldehyde 3-phosphate and acetaldehyde from 2-deoxy-alpha-D-ribose 1-phosphate: step 1/2. In terms of biological role, isomerase that catalyzes the conversion of deoxy-ribose 1-phosphate (dRib-1-P) and ribose 1-phosphate (Rib-1-P) to deoxy-ribose 5-phosphate (dRib-5-P) and ribose 5-phosphate (Rib-5-P), respectively. This is Phosphopentomutase from Streptococcus pyogenes serotype M2 (strain MGAS10270).